Consider the following 179-residue polypeptide: Large ribosomal subunit protein uL5 (179 aa).

It belongs to the universal ribosomal protein uL5 family. In terms of assembly, part of the 50S ribosomal subunit; part of the 5S rRNA/L5/L18/L25 subcomplex. Contacts the 5S rRNA and the P site tRNA. Forms a bridge to the 30S subunit in the 70S ribosome.

This is one of the proteins that bind and probably mediate the attachment of the 5S RNA into the large ribosomal subunit, where it forms part of the central protuberance. In the 70S ribosome it contacts protein S13 of the 30S subunit (bridge B1b), connecting the 2 subunits; this bridge is implicated in subunit movement. Contacts the P site tRNA; the 5S rRNA and some of its associated proteins might help stabilize positioning of ribosome-bound tRNAs. This is Large ribosomal subunit protein uL5 from Citrobacter koseri (strain ATCC BAA-895 / CDC 4225-83 / SGSC4696).